The following is a 2455-amino-acid chain: Ectopic P granules protein 5 homolog (2455 aa).

Positions 1 to 42 (MATLEKPKKEKSKKSRNRVPIEKEEEEPAELSTSEEQRPAEN) are disordered. The residue at position 44 (serine 44) is a Phosphoserine. The disordered stretch occupies residues 77-105 (VTSQEPEGTQEPTETEAQPSAPSAPPSTT). Positions 80 to 97 (QEPEGTQEPTETEAQPSA) are enriched in low complexity. Serine 467 carries the post-translational modification Phosphoserine.

The protein belongs to the EPG5 family.

It localises to the cytoplasm. The protein localises to the perinuclear region. The protein resides in the lysosome. Its function is as follows. Involved in autophagy. Plays a role in late steps of autophagy. The chain is Ectopic P granules protein 5 homolog from Drosophila melanogaster (Fruit fly).